A 442-amino-acid chain; its full sequence is Gamma-glutamyl phosphate reductase (442 aa).

Belongs to the gamma-glutamyl phosphate reductase family.

The protein resides in the cytoplasm. The enzyme catalyses L-glutamate 5-semialdehyde + phosphate + NADP(+) = L-glutamyl 5-phosphate + NADPH + H(+). It participates in amino-acid biosynthesis; L-proline biosynthesis; L-glutamate 5-semialdehyde from L-glutamate: step 2/2. Its function is as follows. Catalyzes the NADPH-dependent reduction of L-glutamate 5-phosphate into L-glutamate 5-semialdehyde and phosphate. The product spontaneously undergoes cyclization to form 1-pyrroline-5-carboxylate. The chain is Gamma-glutamyl phosphate reductase from Campylobacter curvus (strain 525.92).